A 358-amino-acid polypeptide reads, in one-letter code: MGNVAGETRANVIPLHTNRSRVAARRRAGQRAESRQHPSLLSDPNDRASAEQIAAVVREIDEHRRAAGATTSSTEATPNDLAQLVAAVAGFLRQRLTGDYSVDEFGFDPHFNSAIVRPLLRFFFKSWFRVEVSGVENIPRDGAALVVANHAGVLPFDGLMLSVAVHDEHPAHRDLRLLAADMVFDLPVIGEAARKAGHTMACTTDAHRLLASGELTAVFPEGYKGLGKRFEDRYRLQRFGRGGFVSAALRTKAPIVPCSIIGSEEIYPMLTDVKLLARLFGLPYFPITPLFPLAGPVGLVPLPSKWRIAFGEPICTADYASTDADDPMVTFELTDQVRETIQQTLYRLLAGRRNIFFG.

The disordered stretch occupies residues 1–47 (MGNVAGETRANVIPLHTNRSRVAARRRAGQRAESRQHPSLLSDPNDR). Over residues 18-29 (NRSRVAARRRAG) the composition is skewed to basic residues.

This sequence to M.leprae ML2427.

This is an uncharacterized protein from Mycobacterium tuberculosis (strain CDC 1551 / Oshkosh).